A 525-amino-acid chain; its full sequence is NADH-quinone oxidoreductase subunit N (525 aa).

A run of 14 helical transmembrane segments spans residues 26–46, 53–73, 90–110, 143–163, 167–187, 202–222, 246–266, 278–298, 314–334, 341–361, 368–388, 411–431, 449–469, and 487–507; these read LSPMLILFGVALAGVLVDAFA, VLQPLLAGAGFIGAFVAVVLL, PTLFLQGTILVFALLSVLLVA, VQTEAYPLMVFSVSGMLLFVA, LLVMFVALEILSLPLYLLCGL, YFLLGAFSSAFFLYGVAFAYG, LYLSLALLGVGLFFKIGAAPF, PTPITAFMAAGTKVAAFGALL, PVIWAVAILTMVVGAVLALTQ, LAYSAVAHAGFLLVGMAGSNI, MFYLVTYGFTTIAAFAVVSLV, LAGTFAFLLLALAGIPLTSGF, LVVVALVCSAIAAFFYVRVIV, and PTLTFATVGIGALMTLLLGVA.

This sequence belongs to the complex I subunit 2 family. As to quaternary structure, NDH-1 is composed of 14 different subunits. Subunits NuoA, H, J, K, L, M, N constitute the membrane sector of the complex.

Its subcellular location is the cell membrane. The enzyme catalyses a quinone + NADH + 5 H(+)(in) = a quinol + NAD(+) + 4 H(+)(out). Functionally, NDH-1 shuttles electrons from NADH, via FMN and iron-sulfur (Fe-S) centers, to quinones in the respiratory chain. The immediate electron acceptor for the enzyme in this species is believed to be a menaquinone. Couples the redox reaction to proton translocation (for every two electrons transferred, four hydrogen ions are translocated across the cytoplasmic membrane), and thus conserves the redox energy in a proton gradient. The chain is NADH-quinone oxidoreductase subunit N from Parafrankia sp. (strain EAN1pec).